Consider the following 303-residue polypeptide: Methionyl-tRNA formyltransferase (303 aa).

108–111 (SDLP) contributes to the (6S)-5,6,7,8-tetrahydrofolate binding site.

The protein belongs to the Fmt family.

The catalysed reaction is L-methionyl-tRNA(fMet) + (6R)-10-formyltetrahydrofolate = N-formyl-L-methionyl-tRNA(fMet) + (6S)-5,6,7,8-tetrahydrofolate + H(+). Functionally, attaches a formyl group to the free amino group of methionyl-tRNA(fMet). The formyl group appears to play a dual role in the initiator identity of N-formylmethionyl-tRNA by promoting its recognition by IF2 and preventing the misappropriation of this tRNA by the elongation apparatus. This Rickettsia canadensis (strain McKiel) protein is Methionyl-tRNA formyltransferase.